A 281-amino-acid polypeptide reads, in one-letter code: Pantothenate synthetase (281 aa).

30–37 (MGALHAGH) serves as a coordination point for ATP. Residue His37 is the Proton donor of the active site. Gln64 lines the (R)-pantoate pocket. A beta-alanine-binding site is contributed by Gln64. Residue 150-153 (GKKD) coordinates ATP. A (R)-pantoate-binding site is contributed by Gln156. ATP-binding positions include Val179 and 187–190 (YSSR).

It belongs to the pantothenate synthetase family. Homodimer.

It is found in the cytoplasm. The catalysed reaction is (R)-pantoate + beta-alanine + ATP = (R)-pantothenate + AMP + diphosphate + H(+). The protein operates within cofactor biosynthesis; (R)-pantothenate biosynthesis; (R)-pantothenate from (R)-pantoate and beta-alanine: step 1/1. Catalyzes the condensation of pantoate with beta-alanine in an ATP-dependent reaction via a pantoyl-adenylate intermediate. This Akkermansia muciniphila (strain ATCC BAA-835 / DSM 22959 / JCM 33894 / BCRC 81048 / CCUG 64013 / CIP 107961 / Muc) protein is Pantothenate synthetase.